We begin with the raw amino-acid sequence, 986 residues long: Probable ATP-dependent RNA helicase ddx42 (986 aa).

Disordered stretches follow at residues 1–149, 165–192, and 206–252; these read MSKR…DEDD, AAIDNSKSIEKGQQQQQSLKSKRDDIDN, and QLAN…IEPL. Positions 29 to 82 are enriched in low complexity; that stretch reads SNINNNNNSNNNNNNNNNNNNNNNNNNNKNNIGTGINLNIKNNNNINNNNNKSG. Over residues 105–117 the composition is skewed to polar residues; the sequence is PPKSSMTTLNKSP. Low complexity predominate over residues 119-137; sequence NFENASSNNNNNNNNNNQE. Residues 217–236 show a composition bias toward acidic residues; that stretch reads DDDVDYSSLDDDDGYFDDEE. The Q motif motif lies at 305 to 333; it reads TSFGHYGFDDILLQAIAKQSIETPTPIQK. The Helicase ATP-binding domain occupies 336 to 511; it reads IPIALSGRDL…RTILSDPIKI (176 aa). 349–356 contributes to the ATP binding site; the sequence is AKTGSGKT. The short motif at 459–462 is the DEAD box element; it reads DEAD. One can recognise a Helicase C-terminal domain in the interval 522–684; that stretch reads DITQIVQVLK…FVPPELIDVA (163 aa). The tract at residues 688–986 is disordered; it reads PHFKRERGGG…FNQRSQYNRR (299 aa). Over residues 696 to 723 the composition is skewed to gly residues; the sequence is GGGGGSNRGRGRGGGGVGYRRNSRGGGV. Composition is skewed to low complexity over residues 753–764 and 771–978; these read NPNNTDNSEINN and NNEN…NNFN.

Belongs to the DEAD box helicase family. DDX42 subfamily.

Its subcellular location is the nucleus. The enzyme catalyses ATP + H2O = ADP + phosphate + H(+). Its function is as follows. probable ATP-dependent RNA helicase which may bind to partially double-stranded RNAs (dsRNAs) in order to unwind RNA secondary structures. This is Probable ATP-dependent RNA helicase ddx42 (ddx42) from Dictyostelium discoideum (Social amoeba).